The primary structure comprises 476 residues: MEDGVTPPLLITEKDTTMIRVKEEVKKQLWLSAPLIGVSLLQYSLQVISVMFVGHLGSLPLSAASIATSFASVTGFTFLLGTASALETLCGQAYGAKLYGKLGIQMQRAMFVLLILSVPLSIIWANTEQILVLVHQDKSIASVAGSYAKYMIPSLFAYGLLQCINRFLQAQNNVFPVFVCSGITTCLHLLLCWLFVLKTGLGYRGAALAISVSYWFNVILLSCYVKFSPSCSHSWTGFSKEAFQELYDFSKIAFPSAVMVCLELWSFELLVLASGLLPNPVLETSVLSICLNTSLTIWQISVGLGGAASIRVSNELGAGNPQVAKLAVYVIVGIAVAEGIVVVTVLLSIRKILGHAFSSDPKIIAYAASMIPIVACGNFLDGLQCVLSGVARGCGWQKIGACVNLGSYYLVGVPLGLLLGFHFHIGGRGLWLGIVTALSVQVLCLSLVTIFTNWDKEAKKATNRVGSSDDKDGDVQ.

12 consecutive transmembrane segments (helical) span residues 29-51, 70-90, 111-131, 140-160, 177-197, 205-225, 252-272, 286-306, 326-346, 363-383, 405-425, and 431-451; these read LWLS…ISVM, FASV…ETLC, FVLL…EQIL, IASV…AYGL, VFVC…LFVL, GAAL…SCYV, IAFP…LLVL, VLSI…GLGG, LAVY…VTVL, IIAY…LDGL, LGSY…HFHI, and WLGI…VTIF.

It belongs to the multi antimicrobial extrusion (MATE) (TC 2.A.66.1) family.

Its subcellular location is the membrane. This chain is Protein DETOXIFICATION 17, found in Arabidopsis thaliana (Mouse-ear cress).